The chain runs to 142 residues: Sorting nexin-3 (142 aa).

In terms of domain architecture, PX spans 21-138; sequence NFLEIEVRNP…ASFIQDPNWD (118 aa). A 1,2-diacyl-sn-glycero-3-phospho-(1D-myo-inositol-3-phosphate) is bound by residues Arg-64, Ser-66, Lys-90, Arg-95, and Arg-104.

Belongs to the sorting nexin family.

It localises to the cytoplasm. Its subcellular location is the golgi apparatus membrane. The protein resides in the prevacuolar compartment membrane. Functionally, required for retention of late Golgi membrane proteins. Component of the retrieval machinery that functions by direct interaction with the cytosolic tails of certain TGN membrane proteins during the sorting/budding process at the prevacuolar compartment. Binds phosphatidylinositol 3-phosphate (PtdIns(P3)). The chain is Sorting nexin-3 (snx3) from Aspergillus fumigatus (strain ATCC MYA-4609 / CBS 101355 / FGSC A1100 / Af293) (Neosartorya fumigata).